We begin with the raw amino-acid sequence, 496 residues long: Flt3-interacting zinc finger protein 1 (496 aa).

Residue M1 is modified to N-acetylmethionine. 6 consecutive C2H2-type zinc fingers follow at residues F23–H45, H51–H73, Y79–H101, Y107–H130, F200–H222, and F228–H250. A disordered region spans residues H250–A280. Low complexity predominate over residues P259–A280. 5 C2H2-type zinc fingers span residues Y331 to H352, Y358 to H381, F414 to H436, F442 to H464, and F470 to H492. Positions R378–K412 are disordered.

Interacts with FLT3 cytoplasmic catalytic domain, following receptor stimulation, in a kinase-independent manner. Does not interact with other structurally related receptor tyrosine kinases, including KIT, CSF1R and PDGFR. Interacts with NRL. Widely expressed.

It is found in the cytoplasm. It localises to the nucleus. In terms of biological role, may be a transcriptional repressor of NRL function in photoreceptors. Does not repress CRX-mediated transactivation. This chain is Flt3-interacting zinc finger protein 1 (FIZ1), found in Homo sapiens (Human).